We begin with the raw amino-acid sequence, 330 residues long: Delta-aminolevulinic acid dehydratase (330 aa).

Positions 122, 124, 131, and 132 each coordinate Zn(2+). The Schiff-base intermediate with substrate role is filled by lysine 199. Position 199 is an N6-succinyllysine (lysine 199). Arginine 209 lines the 5-aminolevulinate pocket. Serine 215 carries the post-translational modification Phosphoserine. Residue arginine 221 coordinates 5-aminolevulinate. Cysteine 223 lines the Zn(2+) pocket. The active-site Schiff-base intermediate with substrate is lysine 252. Lysine 252 is subject to N6-succinyllysine. 2 residues coordinate 5-aminolevulinate: serine 279 and tyrosine 318.

This sequence belongs to the ALAD family. In terms of assembly, homooctamer; active form. Homohexamer; low activity form. The cofactor is Zn(2+).

It is found in the cytoplasm. Its subcellular location is the cytosol. The enzyme catalyses 2 5-aminolevulinate = porphobilinogen + 2 H2O + H(+). It functions in the pathway porphyrin-containing compound metabolism; protoporphyrin-IX biosynthesis; coproporphyrinogen-III from 5-aminolevulinate: step 1/4. With respect to regulation, can alternate between a fully active homooctamer and a low-activity homohexamer. A bound magnesium ion may promote the assembly of the fully active homooctamer. The magnesium-binding site is absent in the low-activity homohexamer. Inhibited by compounds that favor the hexameric state. Inhibited by divalent lead ions. The lead ions partially displace the zinc cofactor. In terms of biological role, catalyzes an early step in the biosynthesis of tetrapyrroles. Binds two molecules of 5-aminolevulinate per subunit, each at a distinct site, and catalyzes their condensation to form porphobilinogen. The protein is Delta-aminolevulinic acid dehydratase (Alad) of Mus musculus (Mouse).